A 60-amino-acid chain; its full sequence is Large ribosomal subunit protein uL30 (60 aa).

This sequence belongs to the universal ribosomal protein uL30 family. In terms of assembly, part of the 50S ribosomal subunit.

The protein is Large ribosomal subunit protein uL30 of Histophilus somni (strain 2336) (Haemophilus somnus).